A 684-amino-acid polypeptide reads, in one-letter code: Protein-glutamine gamma-glutamyltransferase 4 (684 aa).

Catalysis depends on residues Cys268, His327, and Asp350. Ca(2+) contacts are provided by Asn390, Asp392, Glu442, and Glu447.

The protein belongs to the transglutaminase superfamily. Transglutaminase family. As to quaternary structure, homodimer. Ca(2+) is required as a cofactor. In terms of tissue distribution, prostate.

It carries out the reaction L-glutaminyl-[protein] + L-lysyl-[protein] = [protein]-L-lysyl-N(6)-5-L-glutamyl-[protein] + NH4(+). Associated with the mammalian reproductive process. Catalyzes the cross-linking of proteins and the conjugation of polyamines to specific proteins in the seminal tract. This Homo sapiens (Human) protein is Protein-glutamine gamma-glutamyltransferase 4 (TGM4).